The sequence spans 444 residues: Tol-Pal system protein TolB (444 aa).

The first 18 residues, methionine 1–alanine 18, serve as a signal peptide directing secretion.

Belongs to the TolB family. The Tol-Pal system is composed of five core proteins: the inner membrane proteins TolA, TolQ and TolR, the periplasmic protein TolB and the outer membrane protein Pal. They form a network linking the inner and outer membranes and the peptidoglycan layer.

It is found in the periplasm. Its function is as follows. Part of the Tol-Pal system, which plays a role in outer membrane invagination during cell division and is important for maintaining outer membrane integrity. This chain is Tol-Pal system protein TolB, found in Rickettsia canadensis (strain McKiel).